The chain runs to 315 residues: Secreted frizzled-related protein 3 (315 aa).

An N-terminal signal peptide occupies residues 1–21 (MWRGLPALALAALLLLGRAPA). One can recognise an FZ domain in the interval 22–142 (GRAAACEPVR…LYDRGVCISP (121 aa)). 5 disulfide bridges follow: Cys-27–Cys-88, Cys-35–Cys-81, Cys-72–Cys-111, Cys-100–Cys-139, and Cys-104–Cys-128. A glycan (N-linked (GlcNAc...) asparagine) is linked at Asn-41. One can recognise an NTR domain in the interval 170–290 (CKCKPIKATQ…WDQKLRHLGK (121 aa)). The disordered stretch occupies residues 284-315 (KLRHLGKGKGEPGQSDSALKTGKPGNARQTRS).

This sequence belongs to the secreted frizzled-related protein (sFRP) family.

It localises to the secreted. Its function is as follows. Soluble frizzled-related proteins (sFRPS) function as modulators of Wnt signaling through direct interaction with Wnts. They have a role in regulating cell growth and differentiation in specific cell types. SFRP3/FRZB appears to be involved in limb skeletogenesis. Antagonist of Wnt8 signaling. Regulates chondrocyte maturation and long bone development. The polypeptide is Secreted frizzled-related protein 3 (FRZB) (Gallus gallus (Chicken)).